The chain runs to 168 residues: MPISQKNQNFIDRTFSIIANILLRIIPTTSGEKEAFAYYINGMSAQSEGNYAEALQNYYQAMHLEMDPYDRSYILYNIGIIHTSNGEHSKALEYYCRAIERNPFLPQAFNNMAVICHYRGEQAIQQGDSEIAEAWFDQAAEYWKQARTLTPDNYIEAQNWLTITWRSK.

3 TPR repeats span residues 35–68, 72–105, and 120–153; these read AFAY…EMDP, SYIL…NPFL, and GEQA…TPDN.

It belongs to the Ycf3 family.

The protein resides in the plastid membrane. Its function is as follows. Essential for the assembly of the photosystem I (PSI) complex. May act as a chaperone-like factor to guide the assembly of the PSI subunits. The sequence is that of Photosystem I assembly protein Ycf3 from Cuscuta obtusiflora (Peruvian dodder).